The primary structure comprises 324 residues: uncharacterized protein (324 aa).

The 58-residue stretch at 6–63 folds into the HTH lysR-type domain; it reads LKYRELKIISVIAASENISHAATVLGIAQANVSKYLADFESKVGLKVFDRTTRQLMLT. The H-T-H motif DNA-binding region spans 23-42; sequence ISHAATVLGIAQANVSKYLA.

This sequence belongs to the LysR transcriptional regulatory family.

This is an uncharacterized protein from Escherichia coli (strain K12).